A 718-amino-acid chain; its full sequence is MCASVKYNIRGPALIPRMKTKHRIYYITLFSIVLLGLIATGMFQFWPHSIESSGDWSVEKRTGRDVPLVRLPADSPVPERGDLSCRMHTCFDVYRCGFNPKNKIKVYIYPLKKYVGEAGVPVSSTISREYNELLTAISDSDYYTDDVTRACLFVPSIDLLNQNSLRVKETAQALAQLSRWDRGTNHLLFNMLPGGPPDYNTALDVPRDRALLAGGGFSTWTYRQGYDVSIPVYSPLSAEVDLPEKGPGPRRYFLLSSQVALHPEYREDLAALQARHGEAVLVLDKCSNLSEGVPAARRRCHQQQAFDYPQVLQEATFCMVLRGARLGQAVLSDVLRAGCVPVIIADSYVLPFSEVLDWKRASVVVPEEKMSDVYSILQSIPRRQIEEMQRQARWFWEAYFQSIKAIALATLQIINDRIYPYAAISYEDWNDPPAVKWGSVSNPLFLPLIPPQSQGFTAIVLTYDRVESLFRVITEVSKVPSLSKLLVVWNNQNKNPPEDSLWPKIRVPLKVVRTAENKLSNRFFPYDEIETEAVLAIDDDIIMLTSDELQFGYEVWREFPDRLVGYPGRLHLWDHEMNKWKYESEWTNEVSMVLTGAAFYHKYFNYLYTYKMPGDIKNWVDAHMNCEDIAMNFLVANVTGKAVIKVTPRKKFKCPECTAIDGLSLDQTHMVERSECINKFASVFGTMPLKVVEHRADPVLYKDDFPEKLKSFPNIGSL.

Topologically, residues 1-25 are cytoplasmic; that stretch reads MCASVKYNIRGPALIPRMKTKHRIY. Residues 26–46 form a helical; Signal-anchor for type II membrane protein membrane-spanning segment; that stretch reads YITLFSIVLLGLIATGMFQFW. The Lumenal segment spans residues 47 to 718; the sequence is PHSIESSGDW…LKSFPNIGSL (672 aa). Disulfide bonds link cysteine 85-cysteine 90, cysteine 96-cysteine 151, cysteine 286-cysteine 300, and cysteine 318-cysteine 339. N-linked (GlcNAc...) asparagine glycosylation is present at asparagine 288. UDP is bound by residues leucine 461, arginine 465, asparagine 490, and asparagine 517. Residues arginine 465, asparagine 490, asparagine 517, arginine 522, aspartate 538, aspartate 539, and aspartate 540 each coordinate UDP-N-acetyl-alpha-D-glucosamine. UDP contacts are provided by aspartate 538 and aspartate 539. Aspartate 540 is a Mn(2+) binding site. Tyrosine 582 and serine 584 together coordinate a protein. Cysteine 626 and cysteine 676 are disulfide-bonded. Residues glutamate 627 and aspartate 628 each contribute to the UDP-N-acetyl-alpha-D-glucosamine site. A glycan (N-linked (GlcNAc...) asparagine) is linked at asparagine 637. Residues lysine 651 and lysine 653 each coordinate a protein. Arginine 673 provides a ligand contact to UDP-N-acetyl-alpha-D-glucosamine.

This sequence belongs to the glycosyltransferase 47 family. As to quaternary structure, part of the heparan sulfate polymerase, a dimeric complex composed of EXT1 and EXT2. Could also form homooligomeric complexes. Interacts with NDST1. Interacts with GALNT5. Mn(2+) is required as a cofactor. Post-translationally, a soluble form is generated by proteolytic processing. In terms of processing, N-glycosylated at Asn-637.

The protein localises to the golgi apparatus membrane. Its subcellular location is the golgi apparatus. It is found in the cis-Golgi network membrane. It localises to the endoplasmic reticulum membrane. The protein resides in the secreted. It carries out the reaction 3-O-{[(1-&gt;4)-beta-D-GlcA-(1-&gt;4)-alpha-D-GlcNAc](n)-(1-&gt;4)-beta-D-GlcA-(1-&gt;3)-beta-D-Gal-(1-&gt;3)-beta-D-Gal-(1-&gt;4)-beta-D-Xyl}-L-seryl-[protein] + UDP-N-acetyl-alpha-D-glucosamine = 3-O-{alpha-D-GlcNAc-[(1-&gt;4)-beta-D-GlcA-(1-&gt;4)-alpha-D-GlcNAc](n)-(1-&gt;4)-beta-D-GlcA-(1-&gt;3)-beta-D-Gal-(1-&gt;3)-beta-D-Gal-(1-&gt;4)-beta-D-Xyl}-L-seryl-[protein] + UDP + H(+). The protein operates within protein modification; protein glycosylation. Functionally, glycosyltransferase forming with EXT1 the heterodimeric heparan sulfate polymerase which catalyzes the elongation of the heparan sulfate glycan backbone. Glycan backbone extension consists in the alternating transfer of (1-&gt;4)-beta-D-GlcA and (1-&gt;4)-alpha-D-GlcNAc residues from their respective UDP-sugar donors. Both EXT1 and EXT2 are required for the full activity of the polymerase since EXT1 bears the N-acetylglucosaminyl-proteoglycan 4-beta-glucuronosyltransferase activity within the complex while EXT2 carries the glucuronosyl-N-acetylglucosaminyl-proteoglycan 4-alpha-N-acetylglucosaminyltransferase activity. Heparan sulfate proteoglycans are ubiquitous components of the extracellular matrix and play an important role in tissue homeostasis and signaling. The polypeptide is Exostosin-2 (Bos taurus (Bovine)).